Consider the following 335-residue polypeptide: Holliday junction branch migration complex subunit RuvB (335 aa).

A large ATPase domain (RuvB-L) region spans residues 4-184 (ADRIISGQAK…FGIVQRLEFY (181 aa)). ATP-binding positions include isoleucine 23, arginine 24, glycine 65, lysine 68, threonine 69, threonine 70, 131–133 (EDY), arginine 174, tyrosine 184, and arginine 221. Threonine 69 contributes to the Mg(2+) binding site. The interval 185-255 (SVEDLTSIVA…VAKQALSMLD (71 aa)) is small ATPAse domain (RuvB-S). Positions 258–335 (DAGFDYLDRK…RHFGLQKLSD (78 aa)) are head domain (RuvB-H). The DNA site is built by arginine 294, arginine 313, and arginine 318.

Belongs to the RuvB family. As to quaternary structure, homohexamer. Forms an RuvA(8)-RuvB(12)-Holliday junction (HJ) complex. HJ DNA is sandwiched between 2 RuvA tetramers; dsDNA enters through RuvA and exits via RuvB. An RuvB hexamer assembles on each DNA strand where it exits the tetramer. Each RuvB hexamer is contacted by two RuvA subunits (via domain III) on 2 adjacent RuvB subunits; this complex drives branch migration. In the full resolvosome a probable DNA-RuvA(4)-RuvB(12)-RuvC(2) complex forms which resolves the HJ.

It localises to the cytoplasm. The enzyme catalyses ATP + H2O = ADP + phosphate + H(+). Its function is as follows. The RuvA-RuvB-RuvC complex processes Holliday junction (HJ) DNA during genetic recombination and DNA repair, while the RuvA-RuvB complex plays an important role in the rescue of blocked DNA replication forks via replication fork reversal (RFR). RuvA specifically binds to HJ cruciform DNA, conferring on it an open structure. The RuvB hexamer acts as an ATP-dependent pump, pulling dsDNA into and through the RuvAB complex. RuvB forms 2 homohexamers on either side of HJ DNA bound by 1 or 2 RuvA tetramers; 4 subunits per hexamer contact DNA at a time. Coordinated motions by a converter formed by DNA-disengaged RuvB subunits stimulates ATP hydrolysis and nucleotide exchange. Immobilization of the converter enables RuvB to convert the ATP-contained energy into a lever motion, pulling 2 nucleotides of DNA out of the RuvA tetramer per ATP hydrolyzed, thus driving DNA branch migration. The RuvB motors rotate together with the DNA substrate, which together with the progressing nucleotide cycle form the mechanistic basis for DNA recombination by continuous HJ branch migration. Branch migration allows RuvC to scan DNA until it finds its consensus sequence, where it cleaves and resolves cruciform DNA. This is Holliday junction branch migration complex subunit RuvB from Haemophilus influenzae (strain PittEE).